The primary structure comprises 156 residues: Ribosomal RNA large subunit methyltransferase H (156 aa).

Residues Leu-73, Gly-104, and 123-128 contribute to the S-adenosyl-L-methionine site; that span reads LSSLTL.

This sequence belongs to the RNA methyltransferase RlmH family. In terms of assembly, homodimer.

The protein resides in the cytoplasm. The enzyme catalyses pseudouridine(1915) in 23S rRNA + S-adenosyl-L-methionine = N(3)-methylpseudouridine(1915) in 23S rRNA + S-adenosyl-L-homocysteine + H(+). Specifically methylates the pseudouridine at position 1915 (m3Psi1915) in 23S rRNA. The protein is Ribosomal RNA large subunit methyltransferase H of Bordetella avium (strain 197N).